We begin with the raw amino-acid sequence, 43 residues long: Protein PsbN (43 aa).

Residues 5–27 (TLVTISISCLLVSFTGYALYTAF) traverse the membrane as a helical segment.

Belongs to the PsbN family.

It is found in the plastid. The protein localises to the chloroplast thylakoid membrane. In terms of biological role, may play a role in photosystem I and II biogenesis. This chain is Protein PsbN, found in Pinus koraiensis (Korean pine).